The following is a 2200-amino-acid chain: Non-reducing polyketide synthase tpeB (2200 aa).

In terms of domain architecture, Starter acyltransferase (SAT) spans 16-255 (FFGDQTVDTL…MDLPLGTPAH (240 aa)). Positions 382-815 (SNMIAIVGQS…GGNNCVLLEE (434 aa)) constitute a Ketosynthase family 3 (KS3) domain. Catalysis depends on for beta-ketoacyl synthase activity residues cysteine 554, histidine 690, and histidine 729. The 289-residue stretch at 914 to 1202 (VFAFTGQGSQ…VLNSFIKATL (289 aa)) folds into the Malonyl-CoA:ACP transacylase (MAT) domain. The interval 1296-1621 (TASLQRVREE…TKRILTTILG (326 aa)) is product template (PT) domain. The interval 1300-1433 (QRVREERIQG…CKIRFESKAD (134 aa)) is N-terminal hotdog fold. The region spanning 1300–1617 (QRVREERIQG…FQRLTKRILT (318 aa)) is the PKS/mFAS DH domain. Catalysis depends on histidine 1332, which acts as the Proton acceptor; for dehydratase activity. The tract at residues 1462–1617 (NGHKLPKPVV…FQRLTKRILT (156 aa)) is C-terminal hotdog fold. The active-site Proton donor; for dehydratase activity is aspartate 1522. Positions 1625–1652 (DHHNSNEVRNGNATTTHTNPPAHATTQS) are disordered. The segment covering 1636-1650 (NATTTHTNPPAHATT) has biased composition (low complexity). Carrier domains lie at 1671–1748 (TVGE…AELP) and 1791–1865 (ANYA…GPNT). An O-(pantetheine 4'-phosphoryl)serine mark is found at serine 1708 and serine 1825. The tract at residues 1931–2173 (MFFLPDGTGY…TVPCDHLSIM (243 aa)) is thioesterase (TE) domain.

It depends on pantetheine 4'-phosphate as a cofactor.

It functions in the pathway secondary metabolite biosynthesis. Its function is as follows. Non-reducing polyketide synthase; part of the gene cluster that mediates the biosynthesis of polyesters containing 2,4-dihydroxy-6-(2-hydroxypropyl)benzoate and 3-hydroxybutyrate moieties, such as talapolyester G, 15G256beta and 15G256beta-2; as well as to oxidized derivatives such as 15G256alpha. The biosynthesis of the polyesters probably starts with the formation of the diketide 3-hydroxybutyryl-S-ACP catalyzed by the partially reducing polyketide synthase tpeA. The acceptance of 3-hydroxybutyryl by the non-reducing polyketide synthase tpeB would initiate further elongation and cyclization, catalyzed by KS and PT, respectively, to form 2,4-dihydroxy-6-(2-hydroxyn-propyl)benzoyl-S-ACP intermediate. The TE domain could catalyze lactonization at this step to yield 6-hydroxymellein as a derailment product. The polyesterification process maybe occurs when additional molecules of 3-hydroxybutyryl are transferred to tpeB. Following the first esterification step, an intramolecular cyclization catalyzed by the TE domain of tpeB would give talarodioxadione 1, whereas the ethyl esterification of talapolyester G perhaps happens spontaneously. Further oxidation by the cytochrome P450 monooxygenase tpeC then leads to the formation of oxidized derivatives. The sequence is that of Non-reducing polyketide synthase tpeB from Talaromyces stipitatus (strain ATCC 10500 / CBS 375.48 / QM 6759 / NRRL 1006) (Penicillium stipitatum).